The primary structure comprises 348 residues: D-erythrose-4-phosphate dehydrogenase (348 aa).

NAD(+) contacts are provided by residues arginine 12–isoleucine 13 and arginine 81. Residues serine 154 to threonine 156, arginine 200, threonine 213 to lysine 214, and arginine 236 contribute to the substrate site. The active-site Nucleophile is the cysteine 155. An NAD(+)-binding site is contributed by asparagine 318.

The protein belongs to the glyceraldehyde-3-phosphate dehydrogenase family. Epd subfamily. Homotetramer.

Its subcellular location is the cytoplasm. The enzyme catalyses D-erythrose 4-phosphate + NAD(+) + H2O = 4-phospho-D-erythronate + NADH + 2 H(+). It participates in cofactor biosynthesis; pyridoxine 5'-phosphate biosynthesis; pyridoxine 5'-phosphate from D-erythrose 4-phosphate: step 1/5. In terms of biological role, catalyzes the NAD-dependent conversion of D-erythrose 4-phosphate to 4-phosphoerythronate. The protein is D-erythrose-4-phosphate dehydrogenase of Salmonella paratyphi A (strain ATCC 9150 / SARB42).